We begin with the raw amino-acid sequence, 606 residues long: MSTASAASSSSSSSAGEMIEAPSQVLNFEEIDYKEIEVEEVVGRGAFGVVCKAKWRAKDVAIKQIESESERKAFIVELRQLSRVNHPNIVKLYGACLNPVCLVMEYAEGGSLYNVLHGAEPLPYYTAAHAMSWCLQCSQGVAYLHSMQPKALIHRDLKPPNLLLVAGGTVLKICDFGTACDIQTHMTNNKGSAAWMAPEVFEGSNYSEKCDVFSWGIILWEVITRRKPFDEIGGPAFRIMWAVHNGTRPPLIKNLPKPIESLMTRCWSKDPSQRPSMEEIVKIMTHLMRYFPGADEPLQYPCQYSDEGQSNSATSTGSFMDIASTNTSNKSDTNMEQVPATNDTIKRLESKLLKNQAKQQSESGRLSLGASRGSSVESLPPASEGKRMSADMSEIEARIAATTAYSKPKRGHRKTASFGNILDVPEIVISGNGQPRRRSIQDLTVTGTEPGQVSSRSSSPSVRMITTSGPTSEKPTRSHPWTPDDSTDTNGSDNSIPMAYLTLDHQLQPLAPCPNSKESMAVFEQHCKMAQEYMKVQTEIALLLQRKQELVAELDQDEKDQQNTSRLVQEHKKLLDENKSLSTYYQQCKKQLEVIRSQQQKRQGTS.

The tract at residues 1-300 (MSTASAASSS…FPGADEPLQY (300 aa)) is interaction with MAPK8IP1. Positions 36–291 (IEVEEVVGRG…KIMTHLMRYF (256 aa)) constitute a Protein kinase domain. ATP-binding positions include 42 to 50 (VGRGAFGVV) and K63. K72 is covalently cross-linked (Glycyl lysine isopeptide (Lys-Gly) (interchain with G-Cter in ubiquitin)). D156 serves as the catalytic Proton acceptor. Residue K158 forms a Glycyl lysine isopeptide (Lys-Gly) (interchain with G-Cter in ubiquitin) linkage. Residues T184 and T187 each carry the phosphothreonine; by autocatalysis modification. The residue at position 192 (S192) is a Phosphoserine; by autocatalysis. A Glycyl lysine isopeptide (Lys-Gly) (interchain with G-Cter in ubiquitin) cross-link involves residue K209. Disordered regions lie at residues 301–338 (PCQYSDEGQSNSATSTGSFMDIASTNTSNKSDTNMEQV) and 354–391 (KNQAKQQSESGRLSLGASRGSSVESLPPASEGKRMSAD). Over residues 306–338 (DEGQSNSATSTGSFMDIASTNTSNKSDTNMEQV) the composition is skewed to polar residues. The span at 361-375 (SESGRLSLGASRGSS) shows a compositional bias: low complexity. A phosphoserine mark is found at S367, S389, and S439. Positions 443 to 452 (LTVTGTEPGQ) are enriched in polar residues. A disordered region spans residues 443–493 (LTVTGTEPGQVSSRSSSPSVRMITTSGPTSEKPTRSHPWTPDDSTDTNGSD). Residues 453 to 463 (VSSRSSSPSVR) show a composition bias toward low complexity. S455 is subject to Phosphoserine. Residues 464-473 (MITTSGPTSE) show a composition bias toward polar residues.

The protein belongs to the protein kinase superfamily. STE Ser/Thr protein kinase family. MAP kinase kinase kinase subfamily. In terms of assembly, can form homodimer. Binds both upstream activators and downstream substrates in multimolecular complexes. Interacts with TAB1/MAP3K7IP1, TAB2/MAP3K7IP2 and TAB3/MAP3K7IP3. Identified in the TRIKA2 complex composed of MAP3K7/TAK1, TAB1/MAP3K7IP1 and TAB2/MAP3K7IP2. Interacts with PPM1L and PPM1B/PP2CB. Interaction with PP2A and PPP6C leads to its repressed activity. Interacts with TRAF6 and TAB1/MAP3K7IP1; during IL-1 signaling. Interacts with TAOK1 and TAOK2; interaction with TAOK2 interferes with MAP3K7 interaction with IKKA, thus preventing NF-kappa-B activation. Interacts with DYNC2I2 (via WD domains). Interacts with CYLD and RBCK1. Interacts with TGFBR1; induces MAP3K7/TAK1 activation by TRAF6. Interacts with MAPK8IP1 and SMAD6. Interacts with isoform 1 of VRK2. Interacts with DAB2; the interaction is induced by TGF-beta stimulation and may mediate TGF-beta stimulated JNK activation. Interacts with TRIM5. Part of a complex containing ITCH, NDFIP1 and MAP3K7. Interacts with IFIT5; the interaction synergizes the recruitment of IKK to MAP3K7 and enhances IKK phosphorylation. Interacts with PLEKHM1 (via N- and C-terminus). Found in a complex with SH3RF1, RAC2, MAP2K7/MKK7, MAPK8IP1/JIP1, MAPK8/JNK1 and MAPK9/JNK2. Interacts with SASH1. Interacts with RIPK1. The cofactor is Mg(2+). In terms of processing, association with TAB1/MAP3K7IP1 promotes autophosphorylation at Ser-192 and subsequent activation. Association with TAB2/MAP3K7IP2, itself associated with free unanchored Lys-63 polyubiquitin chain, promotes autophosphorylation and subsequent activation of MAP3K7. Dephosphorylation at Ser-192 by PPM1B/PP2CB and at Thr-187 by PP2A and PPP6C leads to inactivation. Post-translationally, 'Lys-48'-linked polyubiquitination at Lys-72 is induced by TNFalpha, and leads to proteasomal degradation. Undergoes 'Lys-48'-linked polyubiquitination catalyzed by ITCH. 'Lys-63'-linked polyubiquitination at Lys-158 by TRIM8 does not lead to proteasomal degradation but contributes to autophosphorylation and activation. Deubiquitinated by CYLD, a protease that selectively cleaves 'Lys-63'-linked ubiquitin chains. Deubiquitinated by USP19; leading to negative regulation of TNF-alpha- and IL-1beta-triggered NF-kappa-B activation.

It is found in the cytoplasm. It localises to the cell membrane. It catalyses the reaction L-seryl-[protein] + ATP = O-phospho-L-seryl-[protein] + ADP + H(+). It carries out the reaction L-threonyl-[protein] + ATP = O-phospho-L-threonyl-[protein] + ADP + H(+). Its activity is regulated as follows. Activated by pro-inflammatory cytokines and in response to physical and chemical stresses, including osmotic stress, oxidative stress, arsenic and ultraviolet light irradiation. Activated by 'Lys-63'-linked polyubiquitination and by autophosphorylation. Association with TAB1/MAP3K7IP1 and TAB2/MAP3K7IP2 promotes activation through autophosphorylation, whereas PPM1B/PP2CB, PP2A and PPP6C dephosphorylation leads to inactivation. Ceramides are also able to activate MAP3K7/TAK1. Its function is as follows. Serine/threonine kinase which acts as an essential component of the MAP kinase signal transduction pathway. Plays an important role in the cascades of cellular responses evoked by changes in the environment. Mediates signal transduction of TRAF6, various cytokines including interleukin-1 (IL-1), transforming growth factor-beta (TGFB), TGFB-related factors like BMP2 and BMP4, toll-like receptors (TLR), tumor necrosis factor receptor CD40 and B-cell receptor (BCR). Once activated, acts as an upstream activator of the MKK/JNK signal transduction cascade and the p38 MAPK signal transduction cascade through the phosphorylation and activation of several MAP kinase kinases like MAP2K1/MEK1, MAP2K3/MKK3, MAP2K6/MKK6 and MAP2K7/MKK7. These MAP2Ks in turn activate p38 MAPKs and c-jun N-terminal kinases (JNKs); both p38 MAPK and JNK pathways control the transcription factors activator protein-1 (AP-1). Independently of MAP2Ks and p38 MAPKs, acts as a key activator of NF-kappa-B by promoting activation of the I-kappa-B-kinase (IKK) core complex. Mechanistically, recruited to polyubiquitin chains of RIPK2 and IKBKG/NEMO via TAB2/MAP3K7IP2 and TAB3/MAP3K7IP3, and catalyzes phosphorylation and activation of IKBKB/IKKB component of the IKK complex, leading to NF-kappa-B activation. In osmotic stress signaling, plays a major role in the activation of MAPK8/JNK1, but not that of NF-kappa-B. Promotes TRIM5 capsid-specific restriction activity. Phosphorylates RIPK1 at 'Ser-321' which positively regulates RIPK1 interaction with RIPK3 to promote necroptosis but negatively regulates RIPK1 kinase activity and its interaction with FADD to mediate apoptosis. Phosphorylates STING1 in response to cGAMP-activation, promoting association between STEEP1 and STING1 and STING1 translocation to COPII vesicles. The sequence is that of Mitogen-activated protein kinase kinase kinase 7 (MAP3K7) from Pongo abelii (Sumatran orangutan).